The following is a 32-amino-acid chain: Cytochrome b6-f complex subunit 7 (32 aa).

A helical transmembrane segment spans residues 9-27 (AVVFWVLIPVGLAGGALLL).

This sequence belongs to the PetM family. In terms of assembly, the 4 large subunits of the cytochrome b6-f complex are cytochrome b6, subunit IV (17 kDa polypeptide, PetD), cytochrome f and the Rieske protein, while the 4 small subunits are PetG, PetL, PetM and PetN. The complex functions as a dimer.

It is found in the cellular thylakoid membrane. In terms of biological role, component of the cytochrome b6-f complex, which mediates electron transfer between photosystem II (PSII) and photosystem I (PSI), cyclic electron flow around PSI, and state transitions. This chain is Cytochrome b6-f complex subunit 7, found in Synechococcus sp. (strain CC9311).